Reading from the N-terminus, the 312-residue chain is DNA-directed RNA polymerase subunit alpha (312 aa).

An alpha N-terminal domain (alpha-NTD) region spans residues M1–T229. Residues E239–A312 are alpha C-terminal domain (alpha-CTD).

It belongs to the RNA polymerase alpha chain family. In cyanobacteria the RNAP catalytic core is composed of 2 alpha, 1 beta, 1 beta', 1 gamma and 1 omega subunit. When a sigma factor is associated with the core the holoenzyme is formed, which can initiate transcription.

It catalyses the reaction RNA(n) + a ribonucleoside 5'-triphosphate = RNA(n+1) + diphosphate. DNA-dependent RNA polymerase catalyzes the transcription of DNA into RNA using the four ribonucleoside triphosphates as substrates. The chain is DNA-directed RNA polymerase subunit alpha from Synechococcus sp. (strain WH7803).